A 77-amino-acid chain; its full sequence is Large ribosomal subunit protein uL29 (77 aa).

It belongs to the universal ribosomal protein uL29 family.

The polypeptide is Large ribosomal subunit protein uL29 (Mycolicibacterium smegmatis (strain ATCC 700084 / mc(2)155) (Mycobacterium smegmatis)).